The chain runs to 103 residues: Protein E7 (103 aa).

Residues 1-45 are E7 terminal domain; it reads MIGKEVTVRDIVLELSEVQPEVLPVDLFCDEELPNEQQAEEELDI. An LXCXE motif; interaction with host RB1 and TMEM173/STING motif is present at residues 27–31; it reads LFCDE. Residues 56–94 fold into a zinc finger; that stretch reads CGCSCCEVKLRIFVNATNRGIRTFQELLTGDLQLLCPEC. The short motif at 76–84 is the Nuclear export signal element; sequence IRTFQELLT.

This sequence belongs to the papillomaviridae E7 protein family. Homodimer. Homooligomer. Interacts with host RB1; this interaction induces dissociation of RB1-E2F1 complex thereby disrupting RB1 activity. Interacts with host EP300; this interaction represses EP300 transcriptional activity. Interacts with protein E2; this interaction inhibits E7 oncogenic activity. Interacts with host TMEM173/STING; this interaction impairs the ability of TMEM173/STING to sense cytosolic DNA and promote the production of type I interferon (IFN-alpha and IFN-beta). In terms of processing, highly phosphorylated.

It is found in the host cytoplasm. It localises to the host nucleus. In terms of biological role, plays a role in viral genome replication by driving entry of quiescent cells into the cell cycle. Stimulation of progression from G1 to S phase allows the virus to efficiently use the cellular DNA replicating machinery to achieve viral genome replication. E7 protein has both transforming and trans-activating activities. Induces the disassembly of the E2F1 transcription factor from RB1, with subsequent transcriptional activation of E2F1-regulated S-phase genes. Interferes with host histone deacetylation mediated by HDAC1 and HDAC2, leading to transcription activation. Also plays a role in the inhibition of both antiviral and antiproliferative functions of host interferon alpha. Interaction with host TMEM173/STING impairs the ability of TMEM173/STING to sense cytosolic DNA and promote the production of type I interferon (IFN-alpha and IFN-beta). The protein is Protein E7 of Homo sapiens (Human).